The primary structure comprises 239 residues: ATP synthase subunit b (239 aa).

Residues 1–22 (MYAQEAQQKPEAQQSAPAAEQP) are compositionally biased toward low complexity. The disordered stretch occupies residues 1 to 64 (MYAQEAQQKP…GEEEAGEHME (64 aa)). Basic and acidic residues-rich tracts occupy residues 23-33 (KPAEEQAKPEQ) and 45-64 (ELSE…EHME). Residues 85 to 105 (SYWIAMAFNFAIVFALLGWAM) form a helical membrane-spanning segment.

Belongs to the ATPase B chain family. As to quaternary structure, F-type ATPases have 2 components, F(1) - the catalytic core - and F(0) - the membrane proton channel. F(1) has five subunits: alpha(3), beta(3), gamma(1), delta(1), epsilon(1). F(0) has three main subunits: a(1), b(2) and c(10-14). The alpha and beta chains form an alternating ring which encloses part of the gamma chain. F(1) is attached to F(0) by a central stalk formed by the gamma and epsilon chains, while a peripheral stalk is formed by the delta and b chains.

Its subcellular location is the cell inner membrane. Functionally, f(1)F(0) ATP synthase produces ATP from ADP in the presence of a proton or sodium gradient. F-type ATPases consist of two structural domains, F(1) containing the extramembraneous catalytic core and F(0) containing the membrane proton channel, linked together by a central stalk and a peripheral stalk. During catalysis, ATP synthesis in the catalytic domain of F(1) is coupled via a rotary mechanism of the central stalk subunits to proton translocation. In terms of biological role, component of the F(0) channel, it forms part of the peripheral stalk, linking F(1) to F(0). The polypeptide is ATP synthase subunit b (Koribacter versatilis (strain Ellin345)).